The primary structure comprises 193 residues: Probable nicotinate-nucleotide adenylyltransferase (193 aa).

Belongs to the NadD family.

The enzyme catalyses nicotinate beta-D-ribonucleotide + ATP + H(+) = deamido-NAD(+) + diphosphate. It participates in cofactor biosynthesis; NAD(+) biosynthesis; deamido-NAD(+) from nicotinate D-ribonucleotide: step 1/1. Its function is as follows. Catalyzes the reversible adenylation of nicotinate mononucleotide (NaMN) to nicotinic acid adenine dinucleotide (NaAD). This is Probable nicotinate-nucleotide adenylyltransferase from Chlorobium phaeovibrioides (strain DSM 265 / 1930) (Prosthecochloris vibrioformis (strain DSM 265)).